The sequence spans 108 residues: Small ribosomal subunit protein eS25x (108 aa).

Residues 1 to 36 (MAPKKDKVPPPSSKPAKSGGGKQKKKKWSKGKQKEK) are disordered. Over residues 22–31 (KQKKKKWSKG) the composition is skewed to basic residues.

The protein belongs to the eukaryotic ribosomal protein eS25 family.

In Arabidopsis thaliana (Mouse-ear cress), this protein is Small ribosomal subunit protein eS25x (RPS25D).